A 427-amino-acid chain; its full sequence is MLDAKLIKANAALVEQQLEKRGLSGVLKPFLALDEERRKILVQVEERKNFRNNSSQQIGKMKKEGLNPADLMEEVRQAGQQIKELDEELARVEKEIEKILLNIPNLPHESVPVGEDEKSNQEVRRWGEPRQFNFEPQAHWDIGPALDILDFERAAKLSGARFTVYKGAGARLERAVINFYLDIHCGEHGYREILPPFMVIADCMVGTGQLPKFAEDMFKLEGKDMYLIPTAEVPLTNLYREEILEAKDLPFYLTAYTPCFRAEAGSHGRDTRGVIRQHQFNKVELVKLCEPQNSYEELEKLTKDAERVLQLLGLPYRVVVLSTGDMGFSAAKTYDIEVWMPGYQDYREISSCSNCEDFQARRANIRYRPDPKAKLQYVHTLNGSGVAIGRTVAAILENYQQEDGSVIIPEVLRPYMGGLEKINRPEA.

230–232 (TAE) contributes to the L-serine binding site. An ATP-binding site is contributed by 261-263 (RAE). Residue E284 participates in L-serine binding. 348-351 (EISS) provides a ligand contact to ATP. S384 serves as a coordination point for L-serine.

This sequence belongs to the class-II aminoacyl-tRNA synthetase family. Type-1 seryl-tRNA synthetase subfamily. In terms of assembly, homodimer. The tRNA molecule binds across the dimer.

It is found in the cytoplasm. The catalysed reaction is tRNA(Ser) + L-serine + ATP = L-seryl-tRNA(Ser) + AMP + diphosphate + H(+). It catalyses the reaction tRNA(Sec) + L-serine + ATP = L-seryl-tRNA(Sec) + AMP + diphosphate + H(+). The protein operates within aminoacyl-tRNA biosynthesis; selenocysteinyl-tRNA(Sec) biosynthesis; L-seryl-tRNA(Sec) from L-serine and tRNA(Sec): step 1/1. In terms of biological role, catalyzes the attachment of serine to tRNA(Ser). Is also able to aminoacylate tRNA(Sec) with serine, to form the misacylated tRNA L-seryl-tRNA(Sec), which will be further converted into selenocysteinyl-tRNA(Sec). The protein is Serine--tRNA ligase of Syntrophomonas wolfei subsp. wolfei (strain DSM 2245B / Goettingen).